Consider the following 503-residue polypeptide: Anthranilate synthase component 1 3 (503 aa).

Proline 269–serine 271 contributes to the L-tryptophan binding site. Glycine 304–threonine 305 serves as a coordination point for chorismate. A Mg(2+)-binding site is contributed by glutamate 331. Residues tyrosine 419, arginine 439, glycine 453–glycine 455, and glycine 455 contribute to the chorismate site. Glutamate 468 provides a ligand contact to Mg(2+).

It belongs to the anthranilate synthase component I family. As to quaternary structure, tetramer of two components I and two components II. Requires Mg(2+) as cofactor.

The catalysed reaction is chorismate + L-glutamine = anthranilate + pyruvate + L-glutamate + H(+). Its pathway is amino-acid biosynthesis; L-tryptophan biosynthesis; L-tryptophan from chorismate: step 1/5. The protein is Anthranilate synthase component 1 3 (trpE3) of Haloarcula marismortui (strain ATCC 43049 / DSM 3752 / JCM 8966 / VKM B-1809) (Halobacterium marismortui).